The primary structure comprises 28 residues: ASDVTLNSFAEDVTVGECCDCVDLTTVY.

It belongs to the venom metalloproteinase (M12B) family. It depends on Zn(2+) as a cofactor. In terms of tissue distribution, expressed by the venom gland.

Its subcellular location is the secreted. The sequence is that of 50 kDa venom protease from Proatheris superciliaris (Lowland swamp viper).